Reading from the N-terminus, the 869-residue chain is Leucine--tRNA ligase (869 aa).

Positions 42–52 match the 'HIGH' region motif; that stretch reads PYPSGRLHMGH. Residues 620 to 624 carry the 'KMSKS' region motif; that stretch reads KMSKS. Residue Lys-623 participates in ATP binding.

This sequence belongs to the class-I aminoacyl-tRNA synthetase family.

The protein resides in the cytoplasm. The enzyme catalyses tRNA(Leu) + L-leucine + ATP = L-leucyl-tRNA(Leu) + AMP + diphosphate. In Hamiltonella defensa subsp. Acyrthosiphon pisum (strain 5AT), this protein is Leucine--tRNA ligase.